The primary structure comprises 664 residues: Prelamin-A/C (664 aa).

Residue Met1 is modified to N-acetylmethionine. Residues Met1–Arg25 form a disordered region. The segment at Met1–Glu33 is head. The segment at Met1–Ala130 is interaction with MLIP. Residue Thr3 is modified to Phosphothreonine. Ser5 is modified (phosphoserine). At Thr10 the chain carries Phosphothreonine. A phosphoserine mark is found at Ser12 and Ser18. At Thr19 the chain carries Phosphothreonine. Ser22 bears the Phosphoserine; by CDK1 mark. The IF rod domain maps to Glu31–Leu387. Lys32 carries the post-translational modification N6-acetyllysine; alternate. N6-succinyllysine; alternate is present on Lys32. Residue Lys32 forms a Glycyl lysine isopeptide (Lys-Gly) (interchain with G-Cter in SUMO2); alternate linkage. Residues Asp34–Val70 form a coil 1A region. Phosphoserine occurs at positions 51, 66, and 71. Positions Ser71–Ala80 are linker 1. Residues Lys78 and Lys97 each carry the N6-acetyllysine modification. Residues Tyr81–Thr218 form a coil 1B region. Lys97 is covalently cross-linked (Glycyl lysine isopeptide (Lys-Gly) (interchain with G-Cter in SUMO2)). Ser107 carries the phosphoserine modification. Lys108, Lys114, Lys123, Lys135, Lys144, and Lys155 each carry N6-acetyllysine. Lys171 is subject to N6-acetyllysine; alternate. Lys171 carries the N6-succinyllysine; alternate modification. A Glycyl lysine isopeptide (Lys-Gly) (interchain with G-Cter in SUMO2); alternate cross-link involves residue Lys171. N6-acetyllysine occurs at positions 180, 201, and 208. Lys201 is covalently cross-linked (Glycyl lysine isopeptide (Lys-Gly) (interchain with G-Cter in SUMO2); alternate). A Glycyl lysine isopeptide (Lys-Gly) (interchain with G-Cter in SUMO); alternate cross-link involves residue Lys201. Lys208 is covalently cross-linked (Glycyl lysine isopeptide (Lys-Gly) (interchain with G-Cter in SUMO2)). Residue Ser212 is modified to Phosphoserine. Glycyl lysine isopeptide (Lys-Gly) (interchain with G-Cter in SUMO2) cross-links involve residues Lys219 and Lys233. The segment at Lys219 to Ala242 is linker 2. 4 positions are modified to N6-acetyllysine: Lys233, Lys260, Lys265, and Lys270. The interval Asp243–Glu383 is coil 2. The segment at Tyr259 to Arg331 is necessary and sufficient for the interaction with IFFO1. Lys260 is covalently cross-linked (Glycyl lysine isopeptide (Lys-Gly) (interchain with G-Cter in SUMO2); alternate). A Glycyl lysine isopeptide (Lys-Gly) (interchain with G-Cter in SUMO2); alternate cross-link involves residue Lys270. Ser277 is modified (phosphoserine). Ser282 bears the Phosphoserine; by ATR mark. A phosphoserine mark is found at Ser301 and Ser307. Residue Lys311 forms a Glycyl lysine isopeptide (Lys-Gly) (interchain with G-Cter in SUMO2); alternate linkage. Residues Lys311, Lys316, and Lys341 each carry the N6-acetyllysine modification. Residues Lys366 and Lys378 each participate in a glycyl lysine isopeptide (Lys-Gly) (interchain with G-Cter in SUMO2) cross-link. A disordered region spans residues Glu384 to Val442. The tail stretch occupies residues Glu384 to Met664. The residue at position 390 (Ser390) is a Phosphoserine. The residue at position 392 (Ser392) is a Phosphoserine; by CDK1. Ser395 carries the post-translational modification Phosphoserine; by ATR. 6 positions are modified to phosphoserine: Ser398, Ser403, Ser404, Ser406, Ser407, and Ser414. Residue Thr416 is modified to Phosphothreonine. Lys417 carries the post-translational modification N6-acetyllysine. Glycyl lysine isopeptide (Lys-Gly) (interchain with G-Cter in SUMO2) cross-links involve residues Lys417 and Lys420. The Nuclear localization signal signature appears at Lys417–Glu422. Residues Ser423, Ser426, Ser429, and Ser431 each carry the phosphoserine modification. Residues Ser426 to Arg435 show a composition bias toward polar residues. An LTD domain is found at Ser428–Arg545. Lys450 participates in a covalent cross-link: Glycyl lysine isopeptide (Lys-Gly) (interchain with G-Cter in SUMO2); alternate. An N6-acetyllysine mark is found at Lys450 and Lys457. Ser458 and Ser463 each carry phosphoserine. Glycyl lysine isopeptide (Lys-Gly) (interchain with G-Cter in SUMO2) cross-links involve residues Lys470 and Lys486. Lys486 is modified (N6-acetyllysine). Phosphothreonine is present on residues Thr496, Thr505, and Thr510. Residues Ser533 and Ser546 each carry the phosphoserine modification. Thr548 bears the Phosphothreonine mark. The segment at Asp552–Pro576 is disordered. Phosphoserine occurs at positions 568 and 571. A Glycyl lysine isopeptide (Lys-Gly) (interchain with G-Cter in SUMO2); alternate cross-link involves residue Lys597. Residue Lys597 forms a Glycyl lysine isopeptide (Lys-Gly) (interchain with G-Cter in SUMO1); alternate linkage. A disordered region spans residues Ala598 to Ser619. Ser612, Ser613, Ser616, and Ser619 each carry phosphoserine. O-linked (GlcNAc) serine glycans are attached at residues Ser625 and Ser628. Phosphoserine occurs at positions 628, 632, 636, and 652. The propeptide at Leu647–Cys661 is removed in Lamin-A/C form. Cys661 is modified (cysteine methyl ester). Cys661 carries S-farnesyl cysteine lipidation. Positions Ser662–Met664 are cleaved as a propeptide — removed in Prelamin-A/C form and in Lamin-A/C form.

It belongs to the intermediate filament family. Homodimer of lamin A and lamin C. Lamin dimers then assemble into dimeric head-to-tail polymers. Ultimately, two head-to-tail polymers assemble laterally into a protofilament with a uniformly shaped rod of 3.5 nm in diameter. Interacts with lamin-associated polypeptides IA, IB and TMPO-alpha, RB1 and with emerin. Interacts with SREBF1, SREBF2, SUN2 and TMEM43. Interacts with TMEM201. Proteolytically processed isoform A interacts with NARF. Interacts with SUN1. Interacts with MLIP. Interacts with DMPK; may regulate nuclear envelope stability. Interacts with SUV39H1; the interaction increases stability of SUV39H1. Interacts with SYNE2. Interacts with ITSN1 isoform 2. Interacts with IFFO1; enables the formation of an interior nucleoskeleton that is recruited to DNA double-strand breaks. As to quaternary structure, interacts with EMD. In terms of assembly, interacts (via C-terminus) with LEMD2 (via N-terminus) (in vitro). Post-translationally, proteolytic cleavage of the C-terminal of 18 residues of prelamin-A/C results in the production of lamin-A/C. The prelamin-A/C maturation pathway includes farnesylation of CAAX motif by protein farnesyltransferase (FNTA and FNTB), removal of the last three amino acids (-AAX) by RCE1/FACE2 and/or ZMPSTE24, methylation of the C-terminal cysteine by ICMT and endoproteolytic removal of the last 15 C-terminal amino acids by ZMPSTE24. Proteolytic cleavage requires prior farnesylation and methylation, and absence of these blocks cleavage. Farnesylation of prelamin-A/C facilitates nuclear envelope targeting. In terms of processing, phosphorylation plays a key role in lamin organization, subcellular localization and nuclear envelope disintegration. Phosphorylation by CDK1 at Ser-22 and Ser-392 at the onset of mitosis drives lamin disassembly and nuclear envelope breakdown. Phosphorylation at Ser-22 and Ser-392 during interphase promotes localization to the nucleoplasm and regulates lamina assembly. Phosphorylation at Ser-22, Ser-392 and Ser-628 during interphase causes redistribution between the nucleus and the cytoplasm. Phosphorylation at Ser-22 by CDK1 regulates matrix stiffness. Phosphorylation status of Ser-22 determines its localization between double-strand break (DSB) sites and the nuclear matrix. Phosphorylated by ATR at Ser-282 in response to DNA damage, leading to lamin disassembly and nuclear envelope rupture. Phosphorylation also regulates stability in micronuclei arising from genome instability: phosphorylation at Ser-395 by ATR in response to genome instability and double-stranded DNA breaks primes LMNA for subsequent phosphorylation at Ser-392 by CDK1 and micronuclei envelope rupture. The rupture of micronuclear envelope triggers the cGAS-STING pathway thereby activating the type I interferon response and innate immunity. Post-translationally, acetylation by KAT8 is required for nuclear architecture. Sumoylation is necessary for the localization to the nuclear envelope. As to expression, in the arteries, prelamin-A/C accumulation is not observed in young healthy vessels but is prevalent in medial vascular smooth muscle cells (VSMCs) from aged individuals and in atherosclerotic lesions, where it often colocalizes with senescent and degenerate VSMCs. Prelamin-A/C expression increases with age and disease. In normal aging, the accumulation of prelamin-A/C is caused in part by the down-regulation of ZMPSTE24/FACE1 in response to oxidative stress.

The protein resides in the nucleus lamina. It localises to the nucleus envelope. Its subcellular location is the nucleus. The protein localises to the nucleoplasm. It is found in the nucleus matrix. The protein resides in the nucleus speckle. Functionally, lamins are intermediate filament proteins that assemble into a filamentous meshwork, and which constitute the major components of the nuclear lamina, a fibrous layer on the nucleoplasmic side of the inner nuclear membrane. Lamins provide a framework for the nuclear envelope, bridging the nuclear envelope and chromatin, thereby playing an important role in nuclear assembly, chromatin organization, nuclear membrane and telomere dynamics. Lamin A and C also regulate matrix stiffness by conferring nuclear mechanical properties. The structural integrity of the lamina is strictly controlled by the cell cycle, as seen by the disintegration and formation of the nuclear envelope in prophase and telophase, respectively. Lamin A and C are present in equal amounts in the lamina of mammals. Also invoved in DNA repair: recruited by DNA repair proteins XRCC4 and IFFO1 to the DNA double-strand breaks (DSBs) to prevent chromosome translocation by immobilizing broken DNA ends. Required for normal development of peripheral nervous system and skeletal muscle and for muscle satellite cell proliferation. Required for osteoblastogenesis and bone formation. Also prevents fat infiltration of muscle and bone marrow, helping to maintain the volume and strength of skeletal muscle and bone. Required for cardiac homeostasis. Its function is as follows. Prelamin-A/C can accelerate smooth muscle cell senescence. It acts to disrupt mitosis and induce DNA damage in vascular smooth muscle cells (VSMCs), leading to mitotic failure, genomic instability, and premature senescence. The chain is Prelamin-A/C (LMNA) from Homo sapiens (Human).